The sequence spans 259 residues: uncharacterized protein (259 aa).

Residues 158 to 187 (VELHLKIIEEDMKETTKKNKEKKQNSQSQE) adopt a coiled-coil conformation. Over residues 172 to 181 (TTKKNKEKKQ) the composition is skewed to basic and acidic residues. 2 disordered regions span residues 172–197 (TTKK…MEVS) and 217–240 (PVKK…QLSK). 2 stretches are compositionally biased toward low complexity: residues 182–193 (NSQSQEISNSIE) and 217–226 (PVKKTSSASK).

This is an uncharacterized protein from Acanthamoeba polyphaga mimivirus (APMV).